The primary structure comprises 236 residues: Sperm flagellar protein 1 (236 aa).

The Calponin-homology (CH) domain maps to 7–112 (EEALHQLYLW…VLIPLRQRLE (106 aa)). The tract at residues 118-177 (RKQGIGSLQELAPQDGTDYMDVGLSQKARGEGVPDPQGRGQLREGRLPVPRPPGDSQALQ) is disordered. Residues 183-236 (ILQIAEKEQELLASQETVQVLQMKVRRLEHLLQLKNVRIEDLSRRLQQAERKQR) form an essential for homodimerization and microtubule bundling activity region.

As to quaternary structure, homodimer. Interacts with actin, TJP1, CGN and CDH1.

It is found in the cytoplasm. The protein resides in the cell projection. It localises to the cilium. Its subcellular location is the flagellum. The protein localises to the cytoskeleton. It is found in the cilium axoneme. The protein resides in the apical cell membrane. It localises to the basolateral cell membrane. Its subcellular location is the stress fiber. The protein localises to the microvillus. It is found in the lamellipodium. The protein resides in the filopodium. In terms of biological role, microtubule-associated protein involved in the stabilization of microtubules along the axis of migration during radial intercalation. Promotes the establishment and stabilization of an axis of microtubules required for the active migration of cells into the outer epithelium. Microtubule-associated protein that promotes microtubule bundling and stabilizes microtubules against depolymerization in response to cold shock. Essential for ciliary central apparatus formation which requires both its microtubule-binding and bundling activities and for ciliary localization of HYDIN and SPAG6 in ependymal cilia. Binds actin in intestinal epithelial cells (IECs), essential for IECs survival and contributes to formation of filopodia and lamellipodia in migrating IECs. Regulates planar cell polarity signaling pathway and asymmetric microtubule accumulation in ciliated epithelia. This Bos taurus (Bovine) protein is Sperm flagellar protein 1 (SPEF1).